The sequence spans 182 residues: NADH-quinone oxidoreductase subunit B 1 (182 aa).

Cys-47, Cys-48, Cys-113, and Cys-142 together coordinate [4Fe-4S] cluster.

The protein belongs to the complex I 20 kDa subunit family. In terms of assembly, NDH-1 is composed of 14 different subunits. Subunits NuoB, C, D, E, F, and G constitute the peripheral sector of the complex. The cofactor is [4Fe-4S] cluster.

The protein localises to the cell inner membrane. The enzyme catalyses a quinone + NADH + 5 H(+)(in) = a quinol + NAD(+) + 4 H(+)(out). NDH-1 shuttles electrons from NADH, via FMN and iron-sulfur (Fe-S) centers, to quinones in the respiratory chain. Couples the redox reaction to proton translocation (for every two electrons transferred, four hydrogen ions are translocated across the cytoplasmic membrane), and thus conserves the redox energy in a proton gradient. The polypeptide is NADH-quinone oxidoreductase subunit B 1 (Anaeromyxobacter dehalogenans (strain 2CP-C)).